A 132-amino-acid chain; its full sequence is Dinoflagellate viral nucleoprotein 5 (132 aa).

A compositionally biased stretch (basic residues) spans 1–44 (MAAMKKAMKVKKSAKKSAKKSGKKGGMKKKAKRVSKVARGKRAK). The disordered stretch occupies residues 1–84 (MAAMKKAMKV…KKQSEHGKKI (84 aa)). The span at 57 to 66 (GGLTKNSLVK) shows a compositional bias: polar residues.

Post-translationally, phosphorylated.

It localises to the nucleus. The protein localises to the chromosome. DNA-binding protein, which similarly to histones, may compact DNA into chromatin. The sequence is that of Dinoflagellate viral nucleoprotein 5 from Hematodinium sp.